We begin with the raw amino-acid sequence, 49 residues long: Defensin Tm-AMP-D1.2 (49 aa).

Cystine bridges form between cysteine 3/cysteine 49, cysteine 14/cysteine 34, cysteine 20/cysteine 43, and cysteine 24/cysteine 45.

Its function is as follows. Plant defense peptide. This is Defensin Tm-AMP-D1.2 from Triticum monococcum (Einkorn wheat).